Here is a 147-residue protein sequence, read N- to C-terminus: Lysozyme C (147 aa).

Residues 1–18 form the signal peptide; sequence MKFFLILGFCLLPLIAQG. In terms of domain architecture, C-type lysozyme spans 19–147; the sequence is KVFQRCELAA…VSQWIRGCRV (129 aa). Intrachain disulfides connect Cys24–Cys145, Cys48–Cys133, Cys82–Cys98, and Cys94–Cys112. Residues Glu53 and Asp70 contribute to the active site. Substrate is bound at residue Asp119.

Belongs to the glycosyl hydrolase 22 family. As to quaternary structure, monomer. As to expression, expressed in liver and ovary. Not expressed in bone marrow, lung, spleen, intestine or oviduct.

Its subcellular location is the secreted. The catalysed reaction is Hydrolysis of (1-&gt;4)-beta-linkages between N-acetylmuramic acid and N-acetyl-D-glucosamine residues in a peptidoglycan and between N-acetyl-D-glucosamine residues in chitodextrins.. Lysozymes have primarily a bacteriolytic function; those in tissues and body fluids are associated with the monocyte-macrophage system and enhance the activity of immunoagents. Has bacteriolytic activity against M.luteus. The protein is Lysozyme C of Dromaius novaehollandiae (Emu).